The sequence spans 488 residues: Solute carrier family 41 member 3 (488 aa).

Composition is skewed to basic and acidic residues over residues Met1 to Glu19 and Asp27 to Glu36. The segment at Met1–Glu36 is disordered. 9 helical membrane-spanning segments follow: residues Leu63–Ala83, Leu147–Met167, Val189–Gly209, Ile220–Met240, Trp251–Ile271, Tyr284–Ser304, Val377–Glu397, Ile406–Ala426, and Gly450–Leu470.

Belongs to the SLC41A transporter family.

Its subcellular location is the mitochondrion inner membrane. The catalysed reaction is Mg(2+)(in) + 2 Na(+)(out) = Mg(2+)(out) + 2 Na(+)(in). Functionally, na(+)/Mg(2+) ion exchanger that acts as a predominant Mg(2+) efflux system at the mitochondrial inner membrane. The protein is Solute carrier family 41 member 3 (Slc41a3) of Mus musculus (Mouse).